The sequence spans 404 residues: Corticosteroid-binding globulin (404 aa).

The N-terminal stretch at 1 to 30 (MAWSTRTMMSLALYTCFLWLLTSGLKTVQS) is a signal peptide. Asn95 and Asn225 each carry an N-linked (GlcNAc...) asparagine glycan. Residue Gln253 coordinates cortisol. A glycan (N-linked (GlcNAc...) asparagine) is linked at Asn259. Residue Glu285 participates in cortisol binding. N-linked (GlcNAc...) asparagine glycosylation occurs at Asn326. Trp392 is a cortisol binding site.

This sequence belongs to the serpin family. Expressed by the liver; secreted in plasma.

Its subcellular location is the secreted. Functionally, major transport protein for glucocorticoids and progestins in the blood of almost all vertebrate species. The sequence is that of Corticosteroid-binding globulin (SERPINA6) from Mesocricetus auratus (Golden hamster).